The primary structure comprises 412 residues: Short-chain specific acyl-CoA dehydrogenase, mitochondrial (412 aa).

The transit peptide at Met-1–Gln-24 directs the protein to the mitochondrion. A Phosphothreonine modification is found at Thr-27. Lys-51 carries the post-translational modification N6-acetyllysine; alternate. An N6-succinyllysine; alternate modification is found at Lys-51. The residue at position 72 (Lys-72) is an N6-acetyllysine. Lys-129 is subject to N6-acetyllysine; alternate. Residue Lys-129 is modified to N6-succinyllysine; alternate. Residues Phe-152–Ser-161 and Trp-185–Thr-187 each bind FAD. Ser-161 is a substrate binding site. N6-acetyllysine is present on Lys-208. Lys-262 carries the post-translational modification N6-acetyllysine; alternate. Lys-262 is modified (N6-succinyllysine; alternate). A substrate-binding site is contributed by Asp-269–Arg-272. Arg-297 provides a ligand contact to FAD. At Lys-306 the chain carries N6-acetyllysine; alternate. Lys-306 is modified (N6-succinyllysine; alternate). Residues Gln-308 and Gln-365–Gly-369 contribute to the FAD site. Residue Glu-392 is the Proton acceptor of the active site. Gly-393 lines the substrate pocket. FAD is bound at residue Thr-394 to Glu-396.

This sequence belongs to the acyl-CoA dehydrogenase family. As to quaternary structure, homotetramer. Requires FAD as cofactor.

It localises to the mitochondrion matrix. It catalyses the reaction a short-chain 2,3-saturated fatty acyl-CoA + oxidized [electron-transfer flavoprotein] + H(+) = a short-chain (2E)-enoyl-CoA + reduced [electron-transfer flavoprotein]. It carries out the reaction butanoyl-CoA + oxidized [electron-transfer flavoprotein] + H(+) = (2E)-butenoyl-CoA + reduced [electron-transfer flavoprotein]. The catalysed reaction is pentanoyl-CoA + oxidized [electron-transfer flavoprotein] + H(+) = (2E)-pentenoyl-CoA + reduced [electron-transfer flavoprotein]. The enzyme catalyses hexanoyl-CoA + oxidized [electron-transfer flavoprotein] + H(+) = (2E)-hexenoyl-CoA + reduced [electron-transfer flavoprotein]. Its pathway is lipid metabolism; mitochondrial fatty acid beta-oxidation. Short-chain specific acyl-CoA dehydrogenase is one of the acyl-CoA dehydrogenases that catalyze the first step of mitochondrial fatty acid beta-oxidation, an aerobic process breaking down fatty acids into acetyl-CoA and allowing the production of energy from fats. The first step of fatty acid beta-oxidation consists in the removal of one hydrogen from C-2 and C-3 of the straight-chain fatty acyl-CoA thioester, resulting in the formation of trans-2-enoyl-CoA. Among the different mitochondrial acyl-CoA dehydrogenases, short-chain specific acyl-CoA dehydrogenase acts specifically on acyl-CoAs with saturated 4 to 6 carbons long primary chains. The chain is Short-chain specific acyl-CoA dehydrogenase, mitochondrial (ACADS) from Homo sapiens (Human).